Reading from the N-terminus, the 148-residue chain is MFQGETAITVDDKGRMAVPTAYRDLVARVSGNRLVLTYNPFEAGCLWLYAEKEWERVRDDVMSKPNTQRVVRTLQQKLVGSSAVLELDANGRLSIPASHRNAVGIEKKAVLLGMGDKFELWSEQAHRALIQQTLSDGDLGDELLDLRL.

SpoVT-AbrB domains are found at residues 5–53 and 82–125; these read ETAI…AEKE and SAVL…SEQA.

The protein belongs to the MraZ family. In terms of assembly, forms oligomers.

Its subcellular location is the cytoplasm. The protein resides in the nucleoid. The chain is Transcriptional regulator MraZ from Xanthomonas axonopodis pv. citri (strain 306).